The primary structure comprises 339 residues: Phosphate acyltransferase (339 aa).

It belongs to the PlsX family. Homodimer. Probably interacts with PlsY.

The protein resides in the cytoplasm. It carries out the reaction a fatty acyl-[ACP] + phosphate = an acyl phosphate + holo-[ACP]. It functions in the pathway lipid metabolism; phospholipid metabolism. Functionally, catalyzes the reversible formation of acyl-phosphate (acyl-PO(4)) from acyl-[acyl-carrier-protein] (acyl-ACP). This enzyme utilizes acyl-ACP as fatty acyl donor, but not acyl-CoA. This Aeromonas salmonicida (strain A449) protein is Phosphate acyltransferase.